The primary structure comprises 257 residues: Glutamate racemase (257 aa).

Residues 12–13 (DS) and 44–45 (YG) each bind substrate. Cys-75 serves as the catalytic Proton donor/acceptor. Position 76–77 (76–77 (NT)) interacts with substrate. Cys-185 functions as the Proton donor/acceptor in the catalytic mechanism. A substrate-binding site is contributed by 186-187 (TH).

This sequence belongs to the aspartate/glutamate racemases family.

The enzyme catalyses L-glutamate = D-glutamate. It participates in cell wall biogenesis; peptidoglycan biosynthesis. Functionally, provides the (R)-glutamate required for cell wall biosynthesis. This Clostridium botulinum (strain Okra / Type B1) protein is Glutamate racemase.